A 279-amino-acid chain; its full sequence is Elongation factor Ts (279 aa).

The tract at residues 80-83 is involved in Mg(2+) ion dislocation from EF-Tu; that stretch reads TDFV.

This sequence belongs to the EF-Ts family.

Its subcellular location is the cytoplasm. Functionally, associates with the EF-Tu.GDP complex and induces the exchange of GDP to GTP. It remains bound to the aminoacyl-tRNA.EF-Tu.GTP complex up to the GTP hydrolysis stage on the ribosome. This is Elongation factor Ts from Borreliella burgdorferi (strain ZS7) (Borrelia burgdorferi).